Here is a 132-residue protein sequence, read N- to C-terminus: Cytochrome c-554 (132 aa).

A signal peptide spans 1 to 24; it reads MKSISMLTLAASVAFAVTAGQAVA. The region spanning 26–126 is the Cytochrome c domain; sequence GDPAAGEKVF…NVWAYLSQFG (101 aa). Heme c is bound by residues cysteine 38, cysteine 41, histidine 42, and methionine 104.

Binds 1 heme c group covalently per subunit.

Its subcellular location is the periplasm. The chain is Cytochrome c-554 from Methylosinus trichosporium.